A 361-amino-acid polypeptide reads, in one-letter code: Phosphoserine aminotransferase (361 aa).

Residues serine 9 and arginine 42 each contribute to the L-glutamate site. Pyridoxal 5'-phosphate-binding positions include 76–77 (AR), tryptophan 102, threonine 153, aspartate 173, and glutamine 196. Residue lysine 197 is modified to N6-(pyridoxal phosphate)lysine. A pyridoxal 5'-phosphate-binding site is contributed by 238 to 239 (NT).

This sequence belongs to the class-V pyridoxal-phosphate-dependent aminotransferase family. SerC subfamily. As to quaternary structure, homodimer. Pyridoxal 5'-phosphate serves as cofactor.

The protein localises to the cytoplasm. It carries out the reaction O-phospho-L-serine + 2-oxoglutarate = 3-phosphooxypyruvate + L-glutamate. The enzyme catalyses 4-(phosphooxy)-L-threonine + 2-oxoglutarate = (R)-3-hydroxy-2-oxo-4-phosphooxybutanoate + L-glutamate. The protein operates within amino-acid biosynthesis; L-serine biosynthesis; L-serine from 3-phospho-D-glycerate: step 2/3. It participates in cofactor biosynthesis; pyridoxine 5'-phosphate biosynthesis; pyridoxine 5'-phosphate from D-erythrose 4-phosphate: step 3/5. In terms of biological role, catalyzes the reversible conversion of 3-phosphohydroxypyruvate to phosphoserine and of 3-hydroxy-2-oxo-4-phosphonooxybutanoate to phosphohydroxythreonine. This chain is Phosphoserine aminotransferase, found in Erwinia tasmaniensis (strain DSM 17950 / CFBP 7177 / CIP 109463 / NCPPB 4357 / Et1/99).